A 104-amino-acid chain; its full sequence is Thioredoxin (104 aa).

The Thioredoxin domain occupies 2–104; that stretch reads KQVSDASFEE…KLFEWVEASV (103 aa). An intrachain disulfide couples Cys-29 to Cys-32.

It belongs to the thioredoxin family.

In terms of biological role, participates in various redox reactions through the reversible oxidation of its active center dithiol to a disulfide and catalyzes dithiol-disulfide exchange reactions. This is Thioredoxin (trxA) from Rhodospirillum rubrum.